The chain runs to 282 residues: Acetyl-coenzyme A carboxylase carboxyl transferase subunit beta (282 aa).

The CoA carboxyltransferase N-terminal domain occupies valine 25–glutamine 282. The Zn(2+) site is built by cysteine 29, cysteine 32, cysteine 48, and cysteine 51. The segment at cysteine 29 to cysteine 51 adopts a C4-type zinc-finger fold.

This sequence belongs to the AccD/PCCB family. As to quaternary structure, acetyl-CoA carboxylase is a heterohexamer composed of biotin carboxyl carrier protein (AccB), biotin carboxylase (AccC) and two subunits each of ACCase subunit alpha (AccA) and ACCase subunit beta (AccD). Zn(2+) is required as a cofactor.

The protein localises to the cytoplasm. It catalyses the reaction N(6)-carboxybiotinyl-L-lysyl-[protein] + acetyl-CoA = N(6)-biotinyl-L-lysyl-[protein] + malonyl-CoA. It participates in lipid metabolism; malonyl-CoA biosynthesis; malonyl-CoA from acetyl-CoA: step 1/1. Functionally, component of the acetyl coenzyme A carboxylase (ACC) complex. Biotin carboxylase (BC) catalyzes the carboxylation of biotin on its carrier protein (BCCP) and then the CO(2) group is transferred by the transcarboxylase to acetyl-CoA to form malonyl-CoA. In Syntrophotalea carbinolica (strain DSM 2380 / NBRC 103641 / GraBd1) (Pelobacter carbinolicus), this protein is Acetyl-coenzyme A carboxylase carboxyl transferase subunit beta.